The primary structure comprises 215 residues: Ceramide-1-phosphate transfer protein (215 aa).

Residues Asp-57, Lys-61, Arg-107, Arg-111, and His-151 each contribute to the an N-acylsphingoid base 1-phosphate site.

The protein belongs to the GLTP family.

It is found in the cytoplasm. The protein resides in the cytosol. The protein localises to the golgi apparatus. It localises to the trans-Golgi network membrane. Its subcellular location is the cell membrane. It is found in the endosome membrane. The protein resides in the nucleus outer membrane. It catalyses the reaction N-(hexadecanoyl)-sphing-4-enine-1-phosphate(in) = N-(hexadecanoyl)-sphing-4-enine-1-phosphate(out). It carries out the reaction N-(9Z-octadecenoyl)-sphing-4-enine-1-phosphate(in) = N-(9Z-octadecenoyl)-sphing-4-enine-1-phosphate(out). Its function is as follows. Mediates the intracellular transfer of ceramide-1-phosphate (C1P) between organelle membranes and the cell membrane. Required for normal structure of the Golgi stacks. Can bind phosphoceramides with a variety of aliphatic chains, but has a preference for lipids with saturated C16:0 or monounsaturated C18:1 aliphatic chains, and is inefficient with phosphoceramides containing lignoceryl (C24:0). Plays a role in the regulation of the cellular levels of ceramide-1-phosphate, and thereby contributes to the regulation of phospholipase PLA2G4A activity and the release of arachidonic acid. Has no activity with galactosylceramide, lactosylceramide, sphingomyelin, phosphatidylcholine, phosphatidic acid and ceramide. C1P transfer is stimulated by phosphatidylserine in C1P source vesicles. Regulates autophagy and pyroptosis, but not apoptosis. The polypeptide is Ceramide-1-phosphate transfer protein (cptp) (Xenopus tropicalis (Western clawed frog)).